Reading from the N-terminus, the 477-residue chain is Proline--tRNA ligase (477 aa).

This sequence belongs to the class-II aminoacyl-tRNA synthetase family. ProS type 3 subfamily. Homodimer.

It is found in the cytoplasm. The enzyme catalyses tRNA(Pro) + L-proline + ATP = L-prolyl-tRNA(Pro) + AMP + diphosphate. Its function is as follows. Catalyzes the attachment of proline to tRNA(Pro) in a two-step reaction: proline is first activated by ATP to form Pro-AMP and then transferred to the acceptor end of tRNA(Pro). The chain is Proline--tRNA ligase from Methanocorpusculum labreanum (strain ATCC 43576 / DSM 4855 / Z).